A 217-amino-acid chain; its full sequence is Protein MODIFYING WALL LIGNIN-2 (217 aa).

Residues methionine 1–alanine 23 form the signal peptide. Topologically, residues alanine 24 to glycine 51 are cytoplasmic. The helical transmembrane segment at leucine 52–phenylalanine 72 threads the bilayer. Residues arginine 73–threonine 94 are Extracellular-facing. Residues valine 95–isoleucine 115 traverse the membrane as a helical segment. The Cytoplasmic portion of the chain corresponds to serine 116–aspartate 137. The chain crosses the membrane as a helical span at residues glycine 138–alanine 158. Topologically, residues threonine 159 to isoleucine 217 are extracellular. N-linked (GlcNAc...) asparagine glycans are attached at residues asparagine 197 and asparagine 213.

It belongs to the DESIGUAL family.

The protein localises to the cell membrane. In terms of biological role, together with MWL1, contributes to secondary cell wall biology, specifically lignin biosynthesis. The sequence is that of Protein MODIFYING WALL LIGNIN-2 from Arabidopsis thaliana (Mouse-ear cress).